We begin with the raw amino-acid sequence, 707 residues long: D-(-)-3-hydroxybutyrate oligomer hydrolase (707 aa).

Positions 1–24 (MHHDNFRRLGNAAFAAAAALLAVA) are cleaved as a signal peptide. Serine 311 serves as the catalytic Charge relay system.

It belongs to the D-(-)-3-hydroxybutyrate oligomer hydrolase family.

It localises to the secreted. The catalysed reaction is (3R)-hydroxybutanoate dimer + H2O = 2 (R)-3-hydroxybutanoate + H(+). The protein operates within lipid metabolism; butanoate metabolism. Participates in the degradation of poly-3-hydroxybutyrate (PHB). It works downstream of poly(3-hydroxybutyrate) depolymerase, hydrolyzing D(-)-3-hydroxybutyrate oligomers of various length (3HB-oligomers) into 3HB-monomers. The chain is D-(-)-3-hydroxybutyrate oligomer hydrolase from Cupriavidus pinatubonensis (strain JMP 134 / LMG 1197) (Cupriavidus necator (strain JMP 134)).